The following is a 174-amino-acid chain: Probable calcium-binding protein CML20 (174 aa).

A lipid anchor (N-myristoyl glycine) is attached at glycine 2. Positions 14 to 35 (LRRSRSRSPPPAVLDPSQSPLS) are disordered. 4 EF-hand domains span residues 39-74 (EAEP…SVDE), 75-100 (AEEM…AVME), 102-137 (GGLD…LNLD), and 141-174 (LTAE…SKQA). The Ca(2+) site is built by aspartate 52, aspartate 54, aspartate 56, glutamate 63, aspartate 83, aspartate 85, aspartate 87, glutamate 94, aspartate 115, aspartate 117, asparagine 119, glutamate 126, aspartate 154, aspartate 156, aspartate 158, and glutamate 165.

Potential calcium sensor. The sequence is that of Probable calcium-binding protein CML20 (CML20) from Oryza sativa subsp. japonica (Rice).